The chain runs to 166 residues: UPF0260 protein GbCGDNIH1_2046 (166 aa).

The disordered stretch occupies residues 147-166; the sequence is RFPRPRRPRQEPAGKTADES. The span at 154–166 shows a compositional bias: basic and acidic residues; the sequence is PRQEPAGKTADES.

The protein belongs to the UPF0260 family.

In Granulibacter bethesdensis (strain ATCC BAA-1260 / CGDNIH1), this protein is UPF0260 protein GbCGDNIH1_2046.